A 574-amino-acid polypeptide reads, in one-letter code: MNQTRVFLIFAWLMVAALLWMEWGKDKAAANAPVVAATQSVPAARDLDAATPSAANVPAAQAIPQAGAPGAVPATSTTAATPAAAGAAPVVTLTSDVLRLKLDGRSVLDAELLQFPQTKDGTAPVSLLTEDPAHPYNATSGWASEHSPVPGVGGFRAEQPGTTFDMAKGQNTLVVPFVWNGPDGVSIRRTFTLERGRYAISIKDEVINKSGAPWNGYVFRKLSRVPTILSRGMTNPDSFSFNGATWYSPQEGYERRAFKDYMDDGGLNRQITGGWVALLQHHFFTAWIPQKDQASLYVLAQDGPRDVAELRGPAFTVAPGQTASTEARLWVGPKLVSLIAKEDVKGLDRVVDYSRFSIMAIIGQGLFWVLSHLHSFLHNWGWAIIGLVVLLRLALYPLSAAQYKSGAKMRRFQPRLAQLKERYGDDRVKYQQATMELFKKEKINPMGGCLPLLIQMPIFFALYWVLVESVELRQAPWLGWIQDLTARDPYFILPLLNISIMWATQKLTPTPGMDPMQAKMMQFMPLVFGVMMAFMPAGLVLYWVVNGGLGLLIQWWMIRQHGEKPSKIIQANAK.

Helical transmembrane passes span 6 to 26, 356 to 376, 380 to 400, 447 to 467, 489 to 509, and 525 to 545; these read VFLI…WGKD, FSIM…LHSF, WGWA…PLSA, GGCL…WVLV, PYFI…KLTP, and PLVF…YWVV.

Belongs to the OXA1/ALB3/YidC family. Type 1 subfamily. Interacts with the Sec translocase complex via SecD. Specifically interacts with transmembrane segments of nascent integral membrane proteins during membrane integration.

It localises to the cell inner membrane. Functionally, required for the insertion and/or proper folding and/or complex formation of integral membrane proteins into the membrane. Involved in integration of membrane proteins that insert both dependently and independently of the Sec translocase complex, as well as at least some lipoproteins. Aids folding of multispanning membrane proteins. The chain is Membrane protein insertase YidC from Xanthomonas axonopodis pv. citri (strain 306).